Reading from the N-terminus, the 513-residue chain is Putative fucosyltransferase-like protein (513 aa).

A disordered region spans residues 1–34 (MGVFSNLRGPRAGATHDEFPATNGSPSSSSSPSS). Residues 1-39 (MGVFSNLRGPRAGATHDEFPATNGSPSSSSSPSSSIKRK) are Cytoplasmic-facing. Low complexity predominate over residues 25–34 (SPSSSSSPSS). The chain crosses the membrane as a helical; Signal-anchor for type II membrane protein span at residues 40–60 (LSNLLPLCVALVVIAEIGFLG). Residues 61–513 (RLDKVALVDT…PCAKFEVVFV (453 aa)) lie on the Lumenal side of the membrane. N-linked (GlcNAc...) asparagine glycosylation is found at asparagine 348 and asparagine 493.

It belongs to the glycosyltransferase 10 family.

It localises to the golgi apparatus. The protein resides in the golgi stack membrane. It participates in protein modification; protein glycosylation. In terms of biological role, may be involved in cell wall biosynthesis. May act as a fucosyltransferase. The sequence is that of Putative fucosyltransferase-like protein (FUT12) from Arabidopsis thaliana (Mouse-ear cress).